Consider the following 442-residue polypeptide: tRNA-2-methylthio-N(6)-dimethylallyladenosine synthase (442 aa).

In terms of domain architecture, MTTase N-terminal spans 3–120; it reads NKLYIRTFGC…LPNMLNDALN (118 aa). [4Fe-4S] cluster is bound by residues cysteine 12, cysteine 49, cysteine 83, cysteine 157, cysteine 161, and cysteine 164. The region spanning 143–375 is the Radical SAM core domain; that stretch reads RTNSVTAFVS…QKTINNNTEH (233 aa). The 63-residue stretch at 378 to 440 folds into the TRAM domain; sequence QLMIGSIQKV…GNSLMGDLLT (63 aa).

It belongs to the methylthiotransferase family. MiaB subfamily. As to quaternary structure, monomer. Requires [4Fe-4S] cluster as cofactor.

Its subcellular location is the cytoplasm. The enzyme catalyses N(6)-dimethylallyladenosine(37) in tRNA + (sulfur carrier)-SH + AH2 + 2 S-adenosyl-L-methionine = 2-methylsulfanyl-N(6)-dimethylallyladenosine(37) in tRNA + (sulfur carrier)-H + 5'-deoxyadenosine + L-methionine + A + S-adenosyl-L-homocysteine + 2 H(+). Functionally, catalyzes the methylthiolation of N6-(dimethylallyl)adenosine (i(6)A), leading to the formation of 2-methylthio-N6-(dimethylallyl)adenosine (ms(2)i(6)A) at position 37 in tRNAs that read codons beginning with uridine. This Vesicomyosocius okutanii subsp. Calyptogena okutanii (strain HA) protein is tRNA-2-methylthio-N(6)-dimethylallyladenosine synthase.